Consider the following 327-residue polypeptide: Undecaprenyl-phosphate 4-deoxy-4-formamido-L-arabinose transferase (327 aa).

Residues 1 to 235 (MFDAAPIKKV…TCLTTTPLRL (235 aa)) lie on the Cytoplasmic side of the membrane. Residues 236-256 (LSLLGSVIAIGGFSLSVLLIV) traverse the membrane as a helical segment. Over 257 to 269 (LRLALGPQWAAEG) the chain is Periplasmic. Residues 270 to 290 (VFMLFAVLFTFIGAQFIGMGL) form a helical membrane-spanning segment. At 291 to 327 (LGEYIGRIYNDVRARPRYFVQQVIYPESTPFTEESHQ) the chain is on the cytoplasmic side.

The protein belongs to the glycosyltransferase 2 family.

It localises to the cell inner membrane. It catalyses the reaction UDP-4-deoxy-4-formamido-beta-L-arabinose + di-trans,octa-cis-undecaprenyl phosphate = 4-deoxy-4-formamido-alpha-L-arabinopyranosyl di-trans,octa-cis-undecaprenyl phosphate + UDP. The protein operates within glycolipid biosynthesis; 4-amino-4-deoxy-alpha-L-arabinose undecaprenyl phosphate biosynthesis; 4-amino-4-deoxy-alpha-L-arabinose undecaprenyl phosphate from UDP-4-deoxy-4-formamido-beta-L-arabinose and undecaprenyl phosphate: step 1/2. It functions in the pathway bacterial outer membrane biogenesis; lipopolysaccharide biosynthesis. Functionally, catalyzes the transfer of 4-deoxy-4-formamido-L-arabinose from UDP to undecaprenyl phosphate. The modified arabinose is attached to lipid A and is required for resistance to polymyxin and cationic antimicrobial peptides. The sequence is that of Undecaprenyl-phosphate 4-deoxy-4-formamido-L-arabinose transferase from Salmonella agona (strain SL483).